We begin with the raw amino-acid sequence, 168 residues long: Disulfide bond formation protein B 2 (168 aa).

Over 1–9 (MLPARLRTF) the chain is Cytoplasmic. The helical transmembrane segment at 10 to 26 (FLPACLVALAVLVASFR) threads the bilayer. The Periplasmic segment spans residues 27 to 44 (LENTVGLMPCPLCLSQRL). An intrachain disulfide couples Cys36 to Cys39. The chain crosses the membrane as a helical span at residues 45-61 (LLGGYALLCFAAVLQAP). At 62–67 (GTRGIL) the chain is on the cytoplasmic side. The helical transmembrane segment at 68–85 (RYARLALGCSLAGALLAA) threads the bilayer. The Periplasmic segment spans residues 86–140 (RHVWLQGAEGVNEVCPVPIGRVFEQSWSEAARQLLLGGPDCRSLAWSFLDLTLPE). Cysteines 100 and 126 form a disulfide. Residues 141 to 159 (WSLLAFLLLAVLPLSCLLA) traverse the membrane as a helical segment. At 160–168 (YRFRTLART) the chain is on the cytoplasmic side.

It belongs to the DsbB family.

The protein resides in the cell inner membrane. Functionally, required for disulfide bond formation in some periplasmic proteins. Acts by oxidizing the DsbA protein. This Pseudomonas putida (strain ATCC 47054 / DSM 6125 / CFBP 8728 / NCIMB 11950 / KT2440) protein is Disulfide bond formation protein B 2 (dsbB2).